The sequence spans 157 residues: Endoribonuclease YbeY (157 aa).

Zn(2+) is bound by residues His-123, His-127, and His-133.

Belongs to the endoribonuclease YbeY family. Zn(2+) serves as cofactor.

It is found in the cytoplasm. In terms of biological role, single strand-specific metallo-endoribonuclease involved in late-stage 70S ribosome quality control and in maturation of the 3' terminus of the 16S rRNA. The sequence is that of Endoribonuclease YbeY from Desulfitobacterium hafniense (strain Y51).